Here is a 357-residue protein sequence, read N- to C-terminus: Guanine nucleotide-binding protein G(o) subunit alpha (357 aa).

G2 carries the N-myristoyl glycine lipid modification. C3 carries the S-palmitoyl cysteine lipid modification. A G-alpha domain is found at 32-357; that stretch reads KDIKLLLLGA…ANNLRGCGLY (326 aa). Positions 35–48 are G1 motif; it reads KLLLLGAGESGKST. Residues 40 to 47, 179 to 185, 204 to 208, 273 to 276, and A329 each bind GTP; these read GAGESGKS, LRTRVKT, DVGGQ, and NKKD. Residues S47 and T185 each coordinate Mg(2+). Positions 177–185 are G2 motif; it reads DILRTRVKT. The interval 200–209 is G3 motif; the sequence is FKLFDVGGQR. The tract at residues 269 to 276 is G4 motif; sequence ILFLNKKD. The segment at 327 to 332 is G5 motif; it reads TCATDT.

The protein belongs to the G-alpha family. G(i/o/t/z) subfamily. G proteins are composed of 3 units; alpha, beta and gamma. The alpha chain contains the guanine nucleotide binding site.

In terms of biological role, guanine nucleotide-binding proteins (G proteins) are involved as modulators or transducers in various transmembrane signaling systems. The G(o) protein function is not clear. The chain is Guanine nucleotide-binding protein G(o) subunit alpha (SCGOA) from Mizuhopecten yessoensis (Japanese scallop).